A 473-amino-acid polypeptide reads, in one-letter code: MKTLYSLRRFYHVETLFNGTLSLAGRDQETTGFAWWAGNARLINLSGKLLGAHVAHAGLIVFWAGAMNLFEVAHFVPEKPMYEQGLILLPHLATLGWGVGPGGEVIDTFPYFVSGVLHLISSAVLGFGGIYHALLGPETLEESFPFFGYVWKDRNKMTTILGIHLILLGIGAFLLVFKALYFGGVYDTWAPGGGDVRKITNLTLSPSVIFGYLLKSPFGGEGWIVSVDDLEDIIGGHVWLGSICILGGIWHILTKPFAWARRALVWSGEAYLSYSLGALSVFGFIACCFVWFNNTAYPSEFYGPTGPEASQAQAFTFLVRDQRLGANVGSAQGPTGLGKYLMRSPTGEVIFGGETMRFWDLRAPWLEPLRGPNGLDLSRLKKDIQPWQERRSAEYMTHAPLGSLNSVGGVATEINAVNYVSPRSWLATSHFVLGFFLFVGHLWHAGRARAAAAGFEKGIDRDFEPVLSMTPLN.

A propeptide spanning residues 1 to 14 (MKTLYSLRRFYHVE) is cleaved from the precursor. An N-acetylthreonine modification is found at threonine 15. Threonine 15 is subject to Phosphothreonine. 5 consecutive transmembrane segments (helical) span residues 69-93 (LFEV…PHLA), 134-155 (LLGP…KDRN), 178-200 (KALY…RKIT), 255-275 (KPFA…LSYS), and 291-312 (WFNN…ASQA). [CaMn4O5] cluster is bound at residue glutamate 367. Residues 447–471 (RARAAAAGFEKGIDRDFEPVLSMTP) form a helical membrane-spanning segment.

The protein belongs to the PsbB/PsbC family. PsbC subfamily. In terms of assembly, PSII is composed of 1 copy each of membrane proteins PsbA, PsbB, PsbC, PsbD, PsbE, PsbF, PsbH, PsbI, PsbJ, PsbK, PsbL, PsbM, PsbT, PsbX, PsbY, PsbZ, Psb30/Ycf12, at least 3 peripheral proteins of the oxygen-evolving complex and a large number of cofactors. It forms dimeric complexes. Binds multiple chlorophylls and provides some of the ligands for the Ca-4Mn-5O cluster of the oxygen-evolving complex. It may also provide a ligand for a Cl- that is required for oxygen evolution. PSII binds additional chlorophylls, carotenoids and specific lipids. is required as a cofactor.

It localises to the plastid. It is found in the chloroplast thylakoid membrane. One of the components of the core complex of photosystem II (PSII). It binds chlorophyll and helps catalyze the primary light-induced photochemical processes of PSII. PSII is a light-driven water:plastoquinone oxidoreductase, using light energy to abstract electrons from H(2)O, generating O(2) and a proton gradient subsequently used for ATP formation. This is Photosystem II CP43 reaction center protein from Manihot esculenta (Cassava).